We begin with the raw amino-acid sequence, 188 residues long: METVKVTRKDLLLSPENKEIDSLDDVSALLSQRLSNVFEFSIASEEVQSDEVFEDTYPNDDQATFNLFSDVNTVVTKVTEPSIKNSRPLNYYILEDSPERQRQLQASVFTYDQLMKAKEEKWPACQKLHKVVSIKKEESKHRRRPSKKRRIRMKLLREKEEQLKRQAMAAKRNRFRKNVRKLPNKKKH.

The residue at position 14 (serine 14) is a Phosphoserine. Positions 165–188 are disordered; that stretch reads RQAMAAKRNRFRKNVRKLPNKKKH. The span at 171 to 188 shows a compositional bias: basic residues; it reads KRNRFRKNVRKLPNKKKH.

The protein resides in the nucleus. It localises to the nucleolus. This is an uncharacterized protein from Schizosaccharomyces pombe (strain 972 / ATCC 24843) (Fission yeast).